We begin with the raw amino-acid sequence, 402 residues long: Phosphopentomutase (402 aa).

Positions 10, 301, 306, 342, 343, and 354 each coordinate Mn(2+).

Belongs to the phosphopentomutase family. Mn(2+) is required as a cofactor.

It localises to the cytoplasm. It carries out the reaction 2-deoxy-alpha-D-ribose 1-phosphate = 2-deoxy-D-ribose 5-phosphate. The catalysed reaction is alpha-D-ribose 1-phosphate = D-ribose 5-phosphate. It participates in carbohydrate degradation; 2-deoxy-D-ribose 1-phosphate degradation; D-glyceraldehyde 3-phosphate and acetaldehyde from 2-deoxy-alpha-D-ribose 1-phosphate: step 1/2. Isomerase that catalyzes the conversion of deoxy-ribose 1-phosphate (dRib-1-P) and ribose 1-phosphate (Rib-1-P) to deoxy-ribose 5-phosphate (dRib-5-P) and ribose 5-phosphate (Rib-5-P), respectively. This Aeromonas salmonicida (strain A449) protein is Phosphopentomutase.